The primary structure comprises 1414 residues: Phenyloxazoline synthase MbtB (1414 aa).

Residues 5–78 (TACSEIIRAE…AWSQLVSAGT (74 aa)) form the Carrier 1 domain. Serine 39 carries the post-translational modification O-(pantetheine 4'-phosphoryl)serine. A condensation/cyclization region spans residues 96 to 394 (EGEPFPLAPM…SSLLLDVDLT (299 aa)). An adenylation region spans residues 579 to 975 (SYAQLRDQAS…RLPGVHAAAA (397 aa)). Residues 1057 to 1135 (APRTVLQRAL…ALAQLLTGRE (79 aa)) form the Carrier 2 domain. Residue serine 1094 is modified to O-(pantetheine 4'-phosphoryl)serine. The segment at 1188-1413 (GAVLVFPHAG…AVARMVSADV (226 aa)) is thioesterase.

The protein belongs to the ATP-dependent AMP-binding enzyme family. MbtB subfamily. It depends on pantetheine 4'-phosphate as a cofactor. In terms of processing, 4'-phosphopantetheine is transferred from CoA to a specific serine in each of the two carrier protein domains, leading to their activation from apo to holo forms.

It participates in siderophore biosynthesis; mycobactin biosynthesis. Functionally, involved in the initial steps of the mycobactin biosynthetic pathway. Putatively couples activated salicylic acid with serine or threonine and cyclizes this precursor to the hydroxyphenyloxazoline ring system present in this class of siderophores. Essential for growth in macrophages. This Mycobacterium tuberculosis (strain ATCC 25618 / H37Rv) protein is Phenyloxazoline synthase MbtB (mbtB).